An 86-amino-acid chain; its full sequence is Small ribosomal subunit protein bS20 (86 aa).

The segment at 1–23 is disordered; that stretch reads MANIKSSKKDSIKSRKKKKLNAS.

This sequence belongs to the bacterial ribosomal protein bS20 family.

Binds directly to 16S ribosomal RNA. This chain is Small ribosomal subunit protein bS20, found in Buchnera aphidicola subsp. Baizongia pistaciae (strain Bp).